Consider the following 208-residue polypeptide: Holliday junction resolvase RecU (208 aa).

Residues 1 to 28 (MNYPNGKPYSKNKPLDGRKSSPFSSNIE) are disordered. Mg(2+) is bound by residues T87, D89, E102, and Q121.

The protein belongs to the RecU family. Mg(2+) is required as a cofactor.

It localises to the cytoplasm. It catalyses the reaction Endonucleolytic cleavage at a junction such as a reciprocal single-stranded crossover between two homologous DNA duplexes (Holliday junction).. Functionally, endonuclease that resolves Holliday junction intermediates in genetic recombination. Cleaves mobile four-strand junctions by introducing symmetrical nicks in paired strands. Promotes annealing of linear ssDNA with homologous dsDNA. Required for DNA repair, homologous recombination and chromosome segregation. The chain is Holliday junction resolvase RecU from Staphylococcus epidermidis (strain ATCC 12228 / FDA PCI 1200).